The following is a 778-amino-acid chain: Endonuclease MutS2 (778 aa).

328-335 (GPNTGGKT) contacts ATP. The region spanning 702 to 777 (LDLRGKRYEE…GSGATIVTFK (76 aa)) is the Smr domain.

This sequence belongs to the DNA mismatch repair MutS family. MutS2 subfamily. As to quaternary structure, homodimer. Binds to stalled ribosomes, contacting rRNA.

Its function is as follows. Endonuclease that is involved in the suppression of homologous recombination and thus may have a key role in the control of bacterial genetic diversity. In terms of biological role, acts as a ribosome collision sensor, splitting the ribosome into its 2 subunits. Detects stalled/collided 70S ribosomes which it binds and splits by an ATP-hydrolysis driven conformational change. Acts upstream of the ribosome quality control system (RQC), a ribosome-associated complex that mediates the extraction of incompletely synthesized nascent chains from stalled ribosomes and their subsequent degradation. Probably generates substrates for RQC. The sequence is that of Endonuclease MutS2 from Streptococcus pneumoniae serotype 19F (strain G54).